Reading from the N-terminus, the 500-residue chain is AMP phosphorylase (500 aa).

Residues G166, 192-197 (SRAVTS), and T201 each bind AMP. The active-site Proton donor is D254. Positions 262 and 286 each coordinate AMP.

This sequence belongs to the thymidine/pyrimidine-nucleoside phosphorylase family. Type 2 subfamily.

It catalyses the reaction AMP + phosphate = alpha-D-ribose 1,5-bisphosphate + adenine. The catalysed reaction is CMP + phosphate = cytosine + alpha-D-ribose 1,5-bisphosphate. The enzyme catalyses UMP + phosphate = alpha-D-ribose 1,5-bisphosphate + uracil. Functionally, catalyzes the conversion of AMP and phosphate to adenine and ribose 1,5-bisphosphate (R15P). Exhibits phosphorylase activity toward CMP and UMP in addition to AMP. Functions in an archaeal AMP degradation pathway, together with R15P isomerase and RubisCO. This Natronomonas pharaonis (strain ATCC 35678 / DSM 2160 / CIP 103997 / JCM 8858 / NBRC 14720 / NCIMB 2260 / Gabara) (Halobacterium pharaonis) protein is AMP phosphorylase (deoA).